Here is a 124-residue protein sequence, read N- to C-terminus: Small ribosomal subunit protein bS6 (124 aa).

The interval 99–124 (PLPAPRIVPGSEPEPVQQQEAAAVEA) is disordered. Residues 111 to 124 (PEPVQQQEAAAVEA) show a composition bias toward low complexity.

The protein belongs to the bacterial ribosomal protein bS6 family.

Functionally, binds together with bS18 to 16S ribosomal RNA. This chain is Small ribosomal subunit protein bS6, found in Prochlorococcus marinus (strain MIT 9313).